Consider the following 77-residue polypeptide: U10-lycotoxin-Ls1a (77 aa).

Positions 1-20 (MKLIIFTGLVLFAIVSLIEA) are cleaved as a signal peptide. The propeptide occupies 21 to 26 (EEESGR).

Belongs to the neurotoxin 19 (CSTX) family. 09 (U10-Lctx) subfamily. Post-translationally, contains 4 disulfide bonds. As to expression, expressed by the venom gland.

It localises to the secreted. This is U10-lycotoxin-Ls1a from Lycosa singoriensis (Wolf spider).